Consider the following 270-residue polypeptide: Maximins-S type D (270 aa).

An N-terminal signal peptide occupies residues 1-18; the sequence is MNFNYFILVLFFITSGHA. Propeptides lie at residues 19-35 and 52-65; these read KSET…HIKR and SAEE…LVTR. N83 bears the Asparagine amide mark. The propeptide occupies 87-100; sequence SAEEQDLAEDLVTR. K118 carries the lysine amide modification. Positions 122-135 are excised as a propeptide; sequence SAEDQDLAEDLVTR. An Asparagine amide modification is found at N153. A propeptide spanning residues 157–170 is cleaved from the precursor; the sequence is SAEEQDLAEHLVTR. N188 is subject to Asparagine amide. A propeptide spanning residues 192 to 205 is cleaved from the precursor; it reads SAEEQDLVEDLVTR. Position 223 is a lysine amide (K223). Positions 227–240 are excised as a propeptide; the sequence is SAEEQDLAEDLVTR. The residue at position 258 (K258) is a Lysine amide. A propeptide spanning residues 262 to 270 is cleaved from the precursor; it reads SAEQEKDMK.

This sequence belongs to the maximin-S family. As to expression, expressed by the skin dorsal glands.

The protein resides in the secreted. Its function is as follows. Maximin-S1 has no antimicrobial activity. Has no hemolytic activity. Functionally, maximin-S2 has an activity against mycoplasma but has no activity against common Gram-positive and Gram-negative bacteria nor fungi. Has no hemolytic activity. In terms of biological role, maximin-S3 has an activity against mycoplasma but has no activity against common Gram-positive and Gram-negative bacteria nor fungi. Has no hemolytic activity. Maximin-S4 has an activity against mycoplasma but has no activity against common Gram-positive and Gram-negative bacteria nor fungi. Has no hemolytic activity. Its function is as follows. Maximin-S5 has an activity against mycoplasma but has no activity against common Gram-positive and Gram-negative bacteria nor fungi. Has no hemolytic activity. In Bombina maxima (Giant fire-bellied toad), this protein is Maximins-S type D.